Reading from the N-terminus, the 312-residue chain is Malate dehydrogenase (312 aa).

Residues Gly7–Gly13 and Asp34 each bind NAD(+). The substrate site is built by Arg81 and Arg87. Residues Asn94 and Ile117–Asn119 contribute to the NAD(+) site. Residues Asn119 and Arg153 each coordinate substrate. His177 acts as the Proton acceptor in catalysis. Residue Met227 participates in NAD(+) binding.

It belongs to the LDH/MDH superfamily. MDH type 1 family. As to quaternary structure, homodimer.

The enzyme catalyses (S)-malate + NAD(+) = oxaloacetate + NADH + H(+). Functionally, catalyzes the reversible oxidation of malate to oxaloacetate. The protein is Malate dehydrogenase of Salmonella newport (strain SL254).